Consider the following 38-residue polypeptide: Photosystem II reaction center protein Y (38 aa).

Over M1–R4 the chain is Lumenal. A helical membrane pass occupies residues L5–I23. The Stromal portion of the chain corresponds to G24–V38.

This sequence belongs to the PsbY family. In terms of assembly, PSII is composed of 1 copy each of membrane proteins PsbA, PsbB, PsbC, PsbD, PsbE, PsbF, PsbH, PsbI, PsbJ, PsbK, PsbL, PsbM, PsbT, PsbX, PsbY, PsbZ, Psb30/Ycf12, at least 3 peripheral proteins of the oxygen-evolving complex and a large number of cofactors. It forms dimeric complexes.

It is found in the plastid. The protein resides in the cyanelle thylakoid membrane. Its function is as follows. Loosely associated component of the core of photosystem II (PSII), it is not always seen in crystals. PSII is a light-driven water plastoquinone oxidoreductase, using light energy to abstract electrons from H(2)O, generating a proton gradient subsequently used for ATP formation. The chain is Photosystem II reaction center protein Y from Cyanophora paradoxa.